Consider the following 38-residue polypeptide: Bacteriocin BAC79 (38 aa).

The antimicrobial activity of BAC79 was completely lost after treatment with enzymes trypsin, pepsin, proteinase-K, and carboxypeptidase, while there was no loss of activity with either amylase or lipase. In terms of biological role, has antibacterial activity against a wide spectrum of Gram-positive and Gram-negative bacteria, including L.monocytogenes which is inhibited through disruption of the cell membrane. The protein is Bacteriocin BAC79 of Weissella confusa (Lactobacillus confusus).